Reading from the N-terminus, the 379-residue chain is Cytochrome-c peroxidase IdrP1 (379 aa).

The signal sequence occupies residues 1–24 (MNNRKPLQLSLLVASLAVAFTASA). Cytochrome c domains lie at 50-158 (EKIA…DAFK) and 204-355 (TSQK…EALS). Heme c is bound by residues Cys72, Cys75, His76, Cys219, Cys222, and His223.

The iodate reductase (Idr) complex is composed of a molybdopterin-dependent iodate reductase (IdrA and IdrB subunits) and two associated peroxidases (IdrP1 and IdrP2). Heme c serves as cofactor.

It localises to the periplasm. It carries out the reaction 2 Fe(II)-[cytochrome c] + H2O2 + 2 H(+) = 2 Fe(III)-[cytochrome c] + 2 H2O. Functionally, involved in iodate respiration. Probably reduces the H(2)O(2) produced by IdrA/IdrB to H(2)O, using a reduced cytochrome c as the electron donor. The sequence is that of Cytochrome-c peroxidase IdrP1 from Pseudomonas sp. (strain SCT).